The primary structure comprises 229 residues: Peptidase E (229 aa).

Catalysis depends on charge relay system residues Ser-120, Asp-135, and His-157.

Belongs to the peptidase S51 family.

The protein resides in the cytoplasm. It carries out the reaction Dipeptidase E catalyzes the hydrolysis of dipeptides Asp-|-Xaa. It does not act on peptides with N-terminal Glu, Asn or Gln, nor does it cleave isoaspartyl peptides.. In terms of biological role, hydrolyzes dipeptides containing N-terminal aspartate residues. May play a role in allowing the cell to use peptide aspartate to spare carbon otherwise required for the synthesis of the aspartate family of amino acids. This chain is Peptidase E, found in Salmonella paratyphi C (strain RKS4594).